Here is a 198-residue protein sequence, read N- to C-terminus: Carnitine operon protein CaiE (198 aa).

Residues 174–198 (KPLTQAEENRPRLKGTTDVKPKSAQ) are disordered. The segment covering 180 to 198 (EENRPRLKGTTDVKPKSAQ) has biased composition (basic and acidic residues).

This sequence belongs to the transferase hexapeptide repeat family.

The protein operates within amine and polyamine metabolism; carnitine metabolism. In terms of biological role, overproduction of CaiE stimulates the activity of CaiB and CaiD. This chain is Carnitine operon protein CaiE, found in Salmonella typhimurium (strain LT2 / SGSC1412 / ATCC 700720).